Consider the following 72-residue polypeptide: Small proline-rich protein 2B (72 aa).

The segment covering 1–11 has biased composition (low complexity); sequence MSYQQQQCKQP. Residues 1–20 form a disordered region; that stretch reads MSYQQQQCKQPCQPPPVCPT. Tandem repeats lie at residues 21-29, 30-38, and 39-47. Positions 21–47 are 3 X 9 AA tandem repeats of P-K-C-P-[EQ]-P-C-P-P; sequence PKCPEPCPPPKCPEPCPPPKCPQPCPP. Positions 42–72 are disordered; sequence PQPCPPQQCQQKYPPVTPSPPCQPKYPPKSK. A compositionally biased stretch (pro residues) spans 56–72; sequence PVTPSPPCQPKYPPKSK.

It belongs to the cornifin (SPRR) family. In terms of tissue distribution, suprabasal layers of squamous-differentiated tissues such as epidermis, esophagus, tongue and trachea.

It is found in the cytoplasm. Functionally, cross-linked envelope protein of keratinocytes. It is a keratinocyte protein that first appears in the cell cytosol, but ultimately becomes cross-linked to membrane proteins by transglutaminase. All that results in the formation of an insoluble envelope beneath the plasma membrane. In Homo sapiens (Human), this protein is Small proline-rich protein 2B (SPRR2B).